We begin with the raw amino-acid sequence, 60 residues long: UPF0434 protein YcaR (60 aa).

This sequence belongs to the UPF0434 family.

The polypeptide is UPF0434 protein YcaR (Escherichia fergusonii (strain ATCC 35469 / DSM 13698 / CCUG 18766 / IAM 14443 / JCM 21226 / LMG 7866 / NBRC 102419 / NCTC 12128 / CDC 0568-73)).